A 379-amino-acid chain; its full sequence is 2-methylcitrate synthase (379 aa).

Residue His-187 participates in substrate binding. Residue His-222 is part of the active site. Lys-264–Phe-268 serves as a coordination point for CoA. The active site involves His-270. Arg-279 contacts substrate. Asp-321 is a catalytic residue. Positions 346 and 365 each coordinate substrate.

The protein belongs to the citrate synthase family. As to quaternary structure, homodimer.

It catalyses the reaction propanoyl-CoA + oxaloacetate + H2O = (2S,3S)-2-methylcitrate + CoA + H(+). It carries out the reaction oxaloacetate + acetyl-CoA + H2O = citrate + CoA + H(+). The protein operates within organic acid metabolism; propanoate degradation. It functions in the pathway carbohydrate metabolism; tricarboxylic acid cycle; isocitrate from oxaloacetate: step 1/2. In terms of biological role, involved in the catabolism of short chain fatty acids (SCFA) via the tricarboxylic acid (TCA)(acetyl degradation route) and via the 2-methylcitrate cycle I (propionate degradation route). Catalyzes the Claisen condensation of propionyl-CoA and oxaloacetate (OAA) to yield 2-methylcitrate (2-MC) and CoA. Also catalyzes the condensation of oxaloacetate with acetyl-CoA but with a lower specificity. This Antarctic bacterium DS2-3R protein is 2-methylcitrate synthase (gltA).